Consider the following 289-residue polypeptide: 4-hydroxy-tetrahydrodipicolinate synthase (289 aa).

T43 provides a ligand contact to pyruvate. Catalysis depends on Y131, which acts as the Proton donor/acceptor. K160 functions as the Schiff-base intermediate with substrate in the catalytic mechanism. V200 serves as a coordination point for pyruvate.

The protein belongs to the DapA family. As to quaternary structure, homotetramer; dimer of dimers.

Its subcellular location is the cytoplasm. The enzyme catalyses L-aspartate 4-semialdehyde + pyruvate = (2S,4S)-4-hydroxy-2,3,4,5-tetrahydrodipicolinate + H2O + H(+). Its pathway is amino-acid biosynthesis; L-lysine biosynthesis via DAP pathway; (S)-tetrahydrodipicolinate from L-aspartate: step 3/4. Its function is as follows. Catalyzes the condensation of (S)-aspartate-beta-semialdehyde [(S)-ASA] and pyruvate to 4-hydroxy-tetrahydrodipicolinate (HTPA). This chain is 4-hydroxy-tetrahydrodipicolinate synthase, found in Methanococcus maripaludis (strain DSM 14266 / JCM 13030 / NBRC 101832 / S2 / LL).